The sequence spans 84 residues: Small ribosomal subunit protein bS16c (84 aa).

It belongs to the bacterial ribosomal protein bS16 family.

Its subcellular location is the plastid. It localises to the chloroplast. This chain is Small ribosomal subunit protein bS16c, found in Anthoceros angustus (Hornwort).